The primary structure comprises 342 residues: Platelet-activating factor receptor (342 aa).

At 1 to 16 (MEPNNSFRVDSEFRYT) the chain is on the extracellular side. Asn-4 carries N-linked (GlcNAc...) asparagine glycosylation. The chain crosses the membrane as a helical span at residues 17–38 (LFPIFYSIVFVLGVIANSYVLW). Topologically, residues 39 to 54 (VFARLYPSKKFNEIKI) are cytoplasmic. A helical transmembrane segment spans residues 55–74 (FMVNLTMADLLFLVTLPLWI). At 75–91 (VYYYNQGDWILPKFLCN) the chain is on the extracellular side. A disulfide bridge links Cys-90 with Cys-173. Residues 92–113 (LAGCFFFINTYCSVAFLAVITY) traverse the membrane as a helical segment. The Cytoplasmic segment spans residues 114–133 (NRFQAVTRPIKTAQATTRKR). A helical membrane pass occupies residues 134–155 (GILLSLIIWVSIVGAASYFFVL). Topologically, residues 156–184 (DSTNREPNKTGSANITRCFEHYEKGSIPV) are extracellular. Asn-163 and Asn-169 each carry an N-linked (GlcNAc...) asparagine glycan. A helical membrane pass occupies residues 185–205 (LTIHIFLVFSFFLVFLIILFC). Topologically, residues 206-233 (NLVIIRTLLTQQVQIQRNAEVKRRALWM) are cytoplasmic. The helical transmembrane segment at 234 to 254 (VCTVLAVFIICFVPHHLVQLP) threads the bilayer. The Extracellular segment spans residues 255–276 (WTLAELGFQDTDFHQAINDAHQ). Residues 277 to 296 (VTLCLLSTNCVLDPIIYCFL) form a helical membrane-spanning segment. Residues 297–342 (TKKFRKHLTEKLYSMRESRKCSRATSETGTEVVMQLKDVPVKSLKY) lie on the Cytoplasmic side of the membrane.

It belongs to the G-protein coupled receptor 1 family. As to quaternary structure, interacts with ARRB1. In terms of tissue distribution, found in oviductal epithelial and stroma cells. Levels in the oviduct are raised at days 2-4 of both pregnancy and of the estrus cycle. In the endometrium, localization is predominantly to the apical borders of glandular and luminal epithelial cells. Expressed at lower levels in endometrial stromal cells. Levels in the endometrium are increased at day 20 of pregnancy (at protein level).

The protein resides in the cell membrane. In terms of biological role, receptor for platelet activating factor, a chemotactic phospholipid mediator that possesses potent inflammatory, smooth-muscle contractile and hypotensive activity. Seems to mediate its action via a G protein that activates a phosphatidylinositol-calcium second messenger system. May be involved in the morphological and physical modifications of the oviduct and uterus during the estrus cycle and early pregnancy. The protein is Platelet-activating factor receptor of Bos taurus (Bovine).